We begin with the raw amino-acid sequence, 734 residues long: MALRFPRFSQGLAQDPTTRRIWFGIATAHDFESHDDITEERLYQNIFASHFGQLAIIFLWTSGNLFHVAWQGNFETWVQDPLHVRPIAHAIWDPHFGQPAVEAFTRGGALGPVNIAYSGVYQWWYTIGLRTNEDLYTGALFLLFLSAISLIGGWLHLQPKWKPRVSWFKNAESRLNHHLSGLFGVSSLAWTGHLVHVAIPASRGEYVRWNNFLNVLPHPQGLGPLFTGQWNLYAQNPDSSSHLFGTSQGSGTAILTLLGGFHPQTQSLWLTDIAHHHLAIAILFLIAGHMYRTNFGIGHSIKDLLEAHIPPGGRLGRGHKGLYDTINNSIHFQLGLALASLGVITSLVAQHMYSLPAYAFIAQDFTTQAALYTHHQYIAGFIMTGAFAHGAIFFIRDYNPEQNEDNVLARMLDHKEAIISHLSWASLFLGFHTLGLYVHNDVMLAFGTPEKQILIEPIFAQWIQSAHGKTSYGFDVLLSSTNGPAFNAGRSIWLPGWLNAINENSNSLFLTIGPGDFLVHHAIALGLHTTTLILVKGALDARGSKLMPDKKDFGYSFPCDGPGRGGTCDISAWDAFYLAVFWMLNTIGWVTFYWHWKHITLWQGNVSQFNESSTYLMGWLRDYLWLNSSQLINGYNPFGMNSLSVWAWMFLFGHLVWATGFMFLISWRGYWQELIETLAWAHERTPLANLIRWKDKPVALSIVQARLVGLAHFSVGYIFTYAAFLIASTSGKFG.

8 consecutive transmembrane segments (helical) span residues 46–69, 135–158, 175–199, 273–291, 330–353, 369–395, 417–439, and 517–535; these read IFASHFGQLAIIFLWTSGNLFHVA, LYTGALFLLFLSAISLIGGWLHLQ, LNHHLSGLFGVSSLAWTGHLVHVAI, IAHHHLAIAILFLIAGHMY, IHFQLGLALASLGVITSLVAQHMY, AALYTHHQYIAGFIMTGAFAHGAIFFI, AIISHLSWASLFLGFHTLGLYVH, and FLVHHAIALGLHTTTLILV. [4Fe-4S] cluster is bound by residues Cys559 and Cys568. The next 2 helical transmembrane spans lie at 575-596 and 643-665; these read AFYLAVFWMLNTIGWVTFYWHW and LSVWAWMFLFGHLVWATGFMFLI. 3 residues coordinate chlorophyll a: His654, Met662, and Tyr670. Trp671 provides a ligand contact to phylloquinone. The chain crosses the membrane as a helical span at residues 707–727; the sequence is LVGLAHFSVGYIFTYAAFLIA.

It belongs to the PsaA/PsaB family. As to quaternary structure, the PsaA/B heterodimer binds the P700 chlorophyll special pair and subsequent electron acceptors. PSI consists of a core antenna complex that captures photons, and an electron transfer chain that converts photonic excitation into a charge separation. The eukaryotic PSI reaction center is composed of at least 11 subunits. It depends on P700 is a chlorophyll a/chlorophyll a' dimer, A0 is one or more chlorophyll a, A1 is one or both phylloquinones and FX is a shared 4Fe-4S iron-sulfur center. as a cofactor.

It is found in the plastid. The protein localises to the chloroplast thylakoid membrane. The catalysed reaction is reduced [plastocyanin] + hnu + oxidized [2Fe-2S]-[ferredoxin] = oxidized [plastocyanin] + reduced [2Fe-2S]-[ferredoxin]. Functionally, psaA and PsaB bind P700, the primary electron donor of photosystem I (PSI), as well as the electron acceptors A0, A1 and FX. PSI is a plastocyanin-ferredoxin oxidoreductase, converting photonic excitation into a charge separation, which transfers an electron from the donor P700 chlorophyll pair to the spectroscopically characterized acceptors A0, A1, FX, FA and FB in turn. Oxidized P700 is reduced on the lumenal side of the thylakoid membrane by plastocyanin. The chain is Photosystem I P700 chlorophyll a apoprotein A2 from Aethionema grandiflorum (Persian stone-cress).